The following is a 326-amino-acid chain: Probable sodium/potassium-transporting ATPase subunit beta-3 (326 aa).

The Cytoplasmic portion of the chain corresponds to 1–59 (MMSSRTRKIYLFVFMFISTSLQLMNGEAKAEPETFRQFLYNKQKGTVLGRTGTSWCQIT). The helical; Signal-anchor for type II membrane protein transmembrane segment at 60 to 80 (VFYIIFYIFLSAFFIGCLAIF) threads the bilayer. Residues 81–326 (LKTLDPKVPR…DKKPVAAPAA (246 aa)) are Lumenal-facing. N-linked (GlcNAc...) asparagine glycans are attached at residues N144 and N147. A disulfide bridge connects residues C234 and C291.

This sequence belongs to the X(+)/potassium ATPases subunit beta family. The sodium/potassium-transporting ATPase is composed of a catalytic alpha subunit, an auxiliary non-catalytic beta subunit and an additional regulatory subunit.

It is found in the cell membrane. Functionally, this is the non-catalytic component of the active enzyme, which catalyzes the hydrolysis of ATP coupled with the exchange of Na(+) and K(+) ions across the plasma membrane. The beta subunit regulates, through assembly of alpha/beta heterodimers, the number of sodium pumps transported to the plasma membrane. Implicated in genomic response to various soil bacteria that affects fitness, lifespan and brood size. The chain is Probable sodium/potassium-transporting ATPase subunit beta-3 (nkb-3) from Caenorhabditis briggsae.